A 508-amino-acid chain; its full sequence is Glycerol kinase (508 aa).

Threonine 14 is an ADP binding site. Threonine 14, threonine 15, and serine 16 together coordinate ATP. Threonine 14 contributes to the sn-glycerol 3-phosphate binding site. Arginine 18 is a binding site for ADP. Sn-glycerol 3-phosphate contacts are provided by arginine 84, glutamate 85, and tyrosine 136. 3 residues coordinate glycerol: arginine 84, glutamate 85, and tyrosine 136. Histidine 232 carries the phosphohistidine; by HPr modification. Sn-glycerol 3-phosphate is bound at residue aspartate 246. Residues aspartate 246 and glutamine 247 each coordinate glycerol. The ADP site is built by threonine 268 and glycine 311. ATP is bound by residues threonine 268, glycine 311, glutamine 315, and glycine 412. ADP-binding residues include glycine 412 and asparagine 416.

The protein belongs to the FGGY kinase family. Homotetramer and homodimer (in equilibrium). The phosphoenolpyruvate-dependent sugar phosphotransferase system (PTS), including enzyme I, and histidine-containing protein (HPr) are required for the phosphorylation, which leads to the activation of the enzyme.

It catalyses the reaction glycerol + ATP = sn-glycerol 3-phosphate + ADP + H(+). It functions in the pathway polyol metabolism; glycerol degradation via glycerol kinase pathway; sn-glycerol 3-phosphate from glycerol: step 1/1. Its activity is regulated as follows. Activated by phosphorylation and inhibited by fructose 1,6-bisphosphate (FBP). In terms of biological role, key enzyme in the regulation of glycerol uptake and metabolism. Catalyzes the phosphorylation of glycerol to yield sn-glycerol 3-phosphate. This Streptococcus pyogenes serotype M12 (strain MGAS2096) protein is Glycerol kinase.